Consider the following 188-residue polypeptide: Probable nicotinate-nucleotide adenylyltransferase (188 aa).

Belongs to the NadD family.

The enzyme catalyses nicotinate beta-D-ribonucleotide + ATP + H(+) = deamido-NAD(+) + diphosphate. It participates in cofactor biosynthesis; NAD(+) biosynthesis; deamido-NAD(+) from nicotinate D-ribonucleotide: step 1/1. In terms of biological role, catalyzes the reversible adenylation of nicotinate mononucleotide (NaMN) to nicotinic acid adenine dinucleotide (NaAD). The protein is Probable nicotinate-nucleotide adenylyltransferase of Listeria monocytogenes serotype 4a (strain HCC23).